The chain runs to 141 residues: Ribosome maturation factor RimP (141 aa).

The protein belongs to the RimP family.

The protein resides in the cytoplasm. Functionally, required for maturation of 30S ribosomal subunits. This is Ribosome maturation factor RimP from Laribacter hongkongensis (strain HLHK9).